We begin with the raw amino-acid sequence, 332 residues long: HTH-type transcriptional regulator RegA (332 aa).

An HTH lacI-type domain is found at 1 to 57; the sequence is MATSIKDVAREAGVSIATVSRVLNDIDVVNEDTKKKVLDAIKELGYRPNIVARSLKT. Positions 5–24 form a DNA-binding region, H-T-H motif; the sequence is IKDVAREAGVSIATVSRVLN.

Functionally, involved in the regulation of amylase production. The chain is HTH-type transcriptional regulator RegA (regA) from Clostridium saccharobutylicum.